We begin with the raw amino-acid sequence, 295 residues long: Elongation factor Ts (295 aa).

Residues 79–82 (TDFV) are involved in Mg(2+) ion dislocation from EF-Tu.

The protein belongs to the EF-Ts family.

It localises to the cytoplasm. Functionally, associates with the EF-Tu.GDP complex and induces the exchange of GDP to GTP. It remains bound to the aminoacyl-tRNA.EF-Tu.GTP complex up to the GTP hydrolysis stage on the ribosome. In Bacillus cereus (strain B4264), this protein is Elongation factor Ts.